Reading from the N-terminus, the 845-residue chain is Protein SEY1 (845 aa).

The stretch at M1–L29 forms a coiled coil. Residues M1–Q749 lie on the Cytoplasmic side of the membrane. The 223-residue stretch at G112–Y334 folds into the GB1/RHD3-type G domain. A GTP-binding site is contributed by G122 to S129. Residues V750–L770 traverse the membrane as a helical segment. Residues S771 to P773 lie on the Lumenal side of the membrane. The chain crosses the membrane as a helical span at residues V774–L794. Residues S795–N845 are Cytoplasmic-facing. The interval Q823–N845 is disordered. Positions R826–E838 are enriched in basic and acidic residues.

Belongs to the TRAFAC class dynamin-like GTPase superfamily. GB1/RHD3 GTPase family. RHD3 subfamily.

The protein resides in the endoplasmic reticulum membrane. Its function is as follows. Cooperates with the reticulon proteins and tubule-shaping DP1 family proteins to generate and maintain the structure of the tubular endoplasmic reticulum network. Has GTPase activity, which is required for its function in ER organization. This is Protein SEY1 from Mycosarcoma maydis (Corn smut fungus).